Here is a 180-residue protein sequence, read N- to C-terminus: NAD(P)H-quinone oxidoreductase subunit I, chloroplastic (180 aa).

2 consecutive 4Fe-4S ferredoxin-type domains span residues 55–84 and 95–124; these read GRIH…VDWR and LNYS…MTEE. The [4Fe-4S] cluster site is built by C64, C67, C70, C74, C104, C107, C110, and C114.

Belongs to the complex I 23 kDa subunit family. In terms of assembly, NDH is composed of at least 16 different subunits, 5 of which are encoded in the nucleus. It depends on [4Fe-4S] cluster as a cofactor.

The protein localises to the plastid. Its subcellular location is the chloroplast thylakoid membrane. It carries out the reaction a plastoquinone + NADH + (n+1) H(+)(in) = a plastoquinol + NAD(+) + n H(+)(out). The catalysed reaction is a plastoquinone + NADPH + (n+1) H(+)(in) = a plastoquinol + NADP(+) + n H(+)(out). NDH shuttles electrons from NAD(P)H:plastoquinone, via FMN and iron-sulfur (Fe-S) centers, to quinones in the photosynthetic chain and possibly in a chloroplast respiratory chain. The immediate electron acceptor for the enzyme in this species is believed to be plastoquinone. Couples the redox reaction to proton translocation, and thus conserves the redox energy in a proton gradient. The protein is NAD(P)H-quinone oxidoreductase subunit I, chloroplastic of Triticum aestivum (Wheat).